The sequence spans 224 residues: Phosphoglycolate phosphatase (224 aa).

Asp-11 serves as the catalytic Nucleophile. Mg(2+) is bound by residues Asp-11, Asp-13, and Asp-177.

The protein belongs to the HAD-like hydrolase superfamily. CbbY/CbbZ/Gph/YieH family. Mg(2+) serves as cofactor.

The enzyme catalyses 2-phosphoglycolate + H2O = glycolate + phosphate. Its pathway is organic acid metabolism; glycolate biosynthesis; glycolate from 2-phosphoglycolate: step 1/1. Its function is as follows. Specifically catalyzes the dephosphorylation of 2-phosphoglycolate. Is involved in the dissimilation of the intracellular 2-phosphoglycolate formed during the DNA repair of 3'-phosphoglycolate ends, a major class of DNA lesions induced by oxidative stress. This Haemophilus influenzae (strain ATCC 51907 / DSM 11121 / KW20 / Rd) protein is Phosphoglycolate phosphatase.